A 407-amino-acid chain; its full sequence is Queuine tRNA-ribosyltransferase-like protein (407 aa).

It belongs to the queuine tRNA-ribosyltransferase family.

The chain is Queuine tRNA-ribosyltransferase-like protein from Plasmodium falciparum (isolate 3D7).